A 516-amino-acid polypeptide reads, in one-letter code: Lysine--tRNA ligase (516 aa).

A disordered region spans residues 1-23; that stretch reads MTEPNRAQAAPASPTAELPAADE. Residues E426 and E433 each contribute to the Mg(2+) site.

This sequence belongs to the class-II aminoacyl-tRNA synthetase family. As to quaternary structure, homodimer. It depends on Mg(2+) as a cofactor.

It is found in the cytoplasm. It carries out the reaction tRNA(Lys) + L-lysine + ATP = L-lysyl-tRNA(Lys) + AMP + diphosphate. This Cupriavidus pinatubonensis (strain JMP 134 / LMG 1197) (Cupriavidus necator (strain JMP 134)) protein is Lysine--tRNA ligase.